The primary structure comprises 159 residues: MIVFTRRITEADTVTGTLTLAVDSRIKSRLRVTLDDGREAGLMLERGHLLRGGELLADADGRQVVRVLAAPEAVSTVRCADPHLLARAAYHLGNRHVPLQIEPGLLRYQHDHVLDDMVRGLGLNVDAERAPFEPESGAYQSAPHGHGHDHPFVRLPAHS.

It belongs to the UreE family.

The protein resides in the cytoplasm. Its function is as follows. Involved in urease metallocenter assembly. Binds nickel. Probably functions as a nickel donor during metallocenter assembly. The protein is Urease accessory protein UreE of Pseudomonas entomophila (strain L48).